The following is a 442-amino-acid chain: MFDNIVAISSGAKVNQAISIIRLSGPDVFEIMKKIFTGKVGKDKSITYGYIKNDQEIIDEVLVMWFKGPNNFVGEDTVEINAHGGIVVSTLILETIVANGARLAEPGEFSKRAFLNGKLDLVKAEAINDLIHSKTVQQAKINIKKFDRKTSMFINDLINKLVFIIGTCEVNIDYPEYDDIEELTLEVLLPKLKDLEKEISKAVELSERSRIYFNEIPIAIVGRPNVGKSSLLNALLEEDKSIVTNIEGTTRDVVEARFVLNGINFLLKDTAGIRHSENVIEKIGIEKSFKQIQDSEIIIHLVLENQDEDDFERKIKELSEGKKYIRVINKKDLISKDKIKKDQIYISALKGEISELEKAILFEYQNIDLDDFRMIQNTRQLALIKSSLFSIQEAIKGLEQGYTPDVVIVDITKAWEDLVNIVGRADNEKLLDSMFSNFCLGK.

Arginine 22, glutamate 79, and lysine 118 together coordinate (6S)-5-formyl-5,6,7,8-tetrahydrofolate. The region spanning 215-365 is the TrmE-type G domain; the sequence is EIPIAIVGRP…LEKAILFEYQ (151 aa). Asparagine 225 contributes to the K(+) binding site. GTP contacts are provided by residues 225-230, 244-250, and 269-272; these read NVGKSS, TNIEGTT, and DTAG. Serine 229 lines the Mg(2+) pocket. Residues threonine 244, isoleucine 246, and threonine 249 each coordinate K(+). Threonine 250 serves as a coordination point for Mg(2+). Lysine 442 serves as a coordination point for (6S)-5-formyl-5,6,7,8-tetrahydrofolate.

This sequence belongs to the TRAFAC class TrmE-Era-EngA-EngB-Septin-like GTPase superfamily. TrmE GTPase family. As to quaternary structure, homodimer. Heterotetramer of two MnmE and two MnmG subunits. K(+) is required as a cofactor.

The protein resides in the cytoplasm. Its function is as follows. Exhibits a very high intrinsic GTPase hydrolysis rate. Involved in the addition of a carboxymethylaminomethyl (cmnm) group at the wobble position (U34) of certain tRNAs, forming tRNA-cmnm(5)s(2)U34. The polypeptide is tRNA modification GTPase MnmE (Mycoplasmopsis pulmonis (strain UAB CTIP) (Mycoplasma pulmonis)).